We begin with the raw amino-acid sequence, 283 residues long: D-alanine aminotransferase (283 aa).

Residue Tyr31 participates in substrate binding. Arg50 contacts pyridoxal 5'-phosphate. Substrate contacts are provided by Arg98 and His100. Lys144 (proton acceptor) is an active-site residue. Lys144 carries the N6-(pyridoxal phosphate)lysine modification. Residue Glu176 participates in pyridoxal 5'-phosphate binding.

Belongs to the class-IV pyridoxal-phosphate-dependent aminotransferase family. Homodimer. Pyridoxal 5'-phosphate is required as a cofactor.

The catalysed reaction is D-alanine + 2-oxoglutarate = D-glutamate + pyruvate. Functionally, acts on the D-isomers of alanine, leucine, aspartate, glutamate, aminobutyrate, norvaline and asparagine. The enzyme transfers an amino group from a substrate D-amino acid to the pyridoxal phosphate cofactor to form pyridoxamine and an alpha-keto acid in the first half-reaction. The second half-reaction is the reverse of the first, transferring the amino group from the pyridoxamine to a second alpha-keto acid to form the product D-amino acid via a ping-pong mechanism. This is an important process in the formation of D-alanine and D-glutamate, which are essential bacterial cell wall components. The chain is D-alanine aminotransferase (dat) from Bacillus licheniformis.